Here is a 511-residue protein sequence, read N- to C-terminus: 2-isopropylmalate synthase (511 aa).

One can recognise a Pyruvate carboxyltransferase domain in the interval 6–269; it reads IIIFDTTLRD…YTDIKCENIS (264 aa). Mn(2+) is bound by residues aspartate 15, histidine 203, histidine 205, and asparagine 239. The segment at 394–511 is regulatory domain; it reads VLEKLSVISG…SLKVEERKMA (118 aa).

The protein belongs to the alpha-IPM synthase/homocitrate synthase family. LeuA type 1 subfamily. Homodimer. Mn(2+) serves as cofactor.

The protein resides in the cytoplasm. It catalyses the reaction 3-methyl-2-oxobutanoate + acetyl-CoA + H2O = (2S)-2-isopropylmalate + CoA + H(+). The protein operates within amino-acid biosynthesis; L-leucine biosynthesis; L-leucine from 3-methyl-2-oxobutanoate: step 1/4. In terms of biological role, catalyzes the condensation of the acetyl group of acetyl-CoA with 3-methyl-2-oxobutanoate (2-ketoisovalerate) to form 3-carboxy-3-hydroxy-4-methylpentanoate (2-isopropylmalate). In Campylobacter jejuni subsp. doylei (strain ATCC BAA-1458 / RM4099 / 269.97), this protein is 2-isopropylmalate synthase.